Here is a 144-residue protein sequence, read N- to C-terminus: Transcription antitermination protein NusB (144 aa).

The protein belongs to the NusB family.

Its function is as follows. Involved in transcription antitermination. Required for transcription of ribosomal RNA (rRNA) genes. Binds specifically to the boxA antiterminator sequence of the ribosomal RNA (rrn) operons. The sequence is that of Transcription antitermination protein NusB from Leifsonia xyli subsp. xyli (strain CTCB07).